We begin with the raw amino-acid sequence, 714 residues long: Protein HAPLESS 2-B (714 aa).

The first 33 residues, 1–33 (MAPRRRRRAARSSRPLLLALLAAAVNNFAPAGG), serve as a signal peptide directing secretion. Topologically, residues 34-552 (VEVLAKSRLE…FFTGTTCSTR (519 aa)) are extracellular. 7 cysteine pairs are disulfide-bonded: Cys45-Cys59, Cys134-Cys164, Cys146-Cys194, Cys165-Cys321, Cys167-Cys177, Cys304-Cys328, and Cys441-Cys479. The helical transmembrane segment at 553–573 (CWSFLKFVIHGLLLVAVLWLL) threads the bilayer. Topologically, residues 574 to 714 (HRKGLFDPLY…HGDRRHHAWH (141 aa)) are cytoplasmic. The tract at residues 597 to 619 (RARRRHKRAHSHRHSHHHDAHKR) is disordered. Positions 598-619 (ARRRHKRAHSHRHSHHHDAHKR) are enriched in basic residues.

It belongs to the HAP2/GCS1 family.

The protein localises to the endoplasmic reticulum membrane. It localises to the cell membrane. Its function is as follows. Required for male fertility. Plays a role in pollen tube guidance and successful gamete attachment. Essential for the fusion of gametes during double fertilization, where one male gamete fuses with the egg to produce a zygote, and another male gamete fuses with the central cell to produce the endosperm. Mediates the fusion of cell membranes. Not required for pollen tube outgrowth. This is Protein HAPLESS 2-B (HAP2B) from Oryza sativa subsp. japonica (Rice).